The primary structure comprises 435 residues: NADH-quinone oxidoreductase subunit D (435 aa).

The protein belongs to the complex I 49 kDa subunit family. In terms of assembly, NDH-1 is composed of 14 different subunits. Subunits NuoB, C, D, E, F, and G constitute the peripheral sector of the complex.

The protein localises to the cell inner membrane. It carries out the reaction a quinone + NADH + 5 H(+)(in) = a quinol + NAD(+) + 4 H(+)(out). Its function is as follows. NDH-1 shuttles electrons from NADH, via FMN and iron-sulfur (Fe-S) centers, to quinones in the respiratory chain. The immediate electron acceptor for the enzyme in this species is believed to be ubiquinone. Couples the redox reaction to proton translocation (for every two electrons transferred, four hydrogen ions are translocated across the cytoplasmic membrane), and thus conserves the redox energy in a proton gradient. The polypeptide is NADH-quinone oxidoreductase subunit D (Xanthomonas campestris pv. campestris (strain 8004)).